The sequence spans 622 residues: Apical membrane antigen 1 (622 aa).

Positions 1 to 24 are cleaved as a signal peptide; that stretch reads MRKLYCVLLLSAFEFTYMINFGRG. The Extracellular segment spans residues 25–546; it reads QNYWEHPYQN…EHKPTYDNMK (522 aa). Intrachain disulfides connect Cys-149–Cys-302, Cys-217–Cys-247, Cys-263–Cys-275, Cys-320–Cys-418, and Cys-337–Cys-409. Residues Asn-286, Asn-371, Asn-421, Asn-422, and Asn-499 are each glycosylated (N-linked (GlcNAc...) asparagine). 3 cysteine pairs are disulfide-bonded: Cys-443/Cys-502, Cys-490/Cys-507, and Cys-492/Cys-509. A helical membrane pass occupies residues 547–567; the sequence is IIIASSAAVAVLATILMVYLY. The Cytoplasmic portion of the chain corresponds to 568–622; it reads KRKGNAEKYDKMDEPQDYGKSTSRNDEMLDPEASFWGEEKRASHTTPVLMEKPYY. The disordered stretch occupies residues 577–607; the sequence is DKMDEPQDYGKSTSRNDEMLDPEASFWGEEK.

Belongs to the apicomplexan parasites AMA1 family.

The protein localises to the membrane. Its function is as follows. Involved in parasite invasion of erythrocytes. This Plasmodium falciparum (isolate thtn / Thailand) protein is Apical membrane antigen 1 (AMA-1).